The chain runs to 661 residues: Threonine--tRNA ligase (661 aa).

One can recognise a TGS domain in the interval 1-64; the sequence is MSHSVSLTFP…ADGKIEIVTR (64 aa). The interval 245–547 is catalytic; the sequence is DHRRLGREMD…LLENYAGHMP (303 aa). Zn(2+) is bound by residues cysteine 341, histidine 392, and histidine 524.

The protein belongs to the class-II aminoacyl-tRNA synthetase family. Homodimer. Zn(2+) is required as a cofactor.

The protein localises to the cytoplasm. It catalyses the reaction tRNA(Thr) + L-threonine + ATP = L-threonyl-tRNA(Thr) + AMP + diphosphate + H(+). Functionally, catalyzes the attachment of threonine to tRNA(Thr) in a two-step reaction: L-threonine is first activated by ATP to form Thr-AMP and then transferred to the acceptor end of tRNA(Thr). Also edits incorrectly charged L-seryl-tRNA(Thr). This Sinorhizobium fredii (strain NBRC 101917 / NGR234) protein is Threonine--tRNA ligase.